Reading from the N-terminus, the 87-residue chain is U3-theraphotoxin-Cg1c (87 aa).

Residues 1–23 (MRTFTLIAILTCAVLVIFHVSAA) form the signal peptide. A propeptide spanning residues 24-51 (EELEAQDVIQPEDIFTGVATLEEDRIFE) is cleaved from the precursor. Disulfide bonds link Cys52–Cys65, Cys56–Cys79, and Cys73–Cys84.

The protein belongs to the neurotoxin 12 (Hwtx-2) family. 03 (juruin) subfamily. Expressed by the venom gland.

The protein localises to the secreted. Probable ion channel inhibitor. In Chilobrachys guangxiensis (Chinese earth tiger tarantula), this protein is U3-theraphotoxin-Cg1c.